A 354-amino-acid chain; its full sequence is UDP-3-O-acylglucosamine N-acyltransferase (354 aa).

The active-site Proton acceptor is the His257. Positions 335–354 (AQQVSKSKLRGRNPGGKQND) are disordered.

The protein belongs to the transferase hexapeptide repeat family. LpxD subfamily. As to quaternary structure, homotrimer.

The catalysed reaction is a UDP-3-O-[(3R)-3-hydroxyacyl]-alpha-D-glucosamine + a (3R)-hydroxyacyl-[ACP] = a UDP-2-N,3-O-bis[(3R)-3-hydroxyacyl]-alpha-D-glucosamine + holo-[ACP] + H(+). It participates in bacterial outer membrane biogenesis; LPS lipid A biosynthesis. In terms of biological role, catalyzes the N-acylation of UDP-3-O-acylglucosamine using 3-hydroxyacyl-ACP as the acyl donor. Is involved in the biosynthesis of lipid A, a phosphorylated glycolipid that anchors the lipopolysaccharide to the outer membrane of the cell. This Rhizobium etli (strain ATCC 51251 / DSM 11541 / JCM 21823 / NBRC 15573 / CFN 42) protein is UDP-3-O-acylglucosamine N-acyltransferase.